Consider the following 368-residue polypeptide: HECT-type ubiquitin ligase-interacting protein apyA (368 aa).

It belongs to the arrestin family. Interacts with hulA.

In terms of biological role, may be involved in signaling by recognizing appropriately phosphorylated substrates via its arrestin domains and then recruit a HECT-type ubiquitin ligase such as hulA, leading to ubiquitination of the substrate, providing a link between ubiquitination and phosphorylation in protein regulation and stability. This chain is HECT-type ubiquitin ligase-interacting protein apyA (apyA), found in Emericella nidulans (strain FGSC A4 / ATCC 38163 / CBS 112.46 / NRRL 194 / M139) (Aspergillus nidulans).